Reading from the N-terminus, the 61-residue chain is Small ribosomal subunit protein uS14 (61 aa).

4 residues coordinate Zn(2+): cysteine 24, cysteine 27, cysteine 40, and cysteine 43.

Belongs to the universal ribosomal protein uS14 family. Zinc-binding uS14 subfamily. Part of the 30S ribosomal subunit. Contacts proteins S3 and S10. The cofactor is Zn(2+).

Functionally, binds 16S rRNA, required for the assembly of 30S particles and may also be responsible for determining the conformation of the 16S rRNA at the A site. This chain is Small ribosomal subunit protein uS14, found in Sulfurimonas denitrificans (strain ATCC 33889 / DSM 1251) (Thiomicrospira denitrificans (strain ATCC 33889 / DSM 1251)).